A 185-amino-acid chain; its full sequence is Ethylene-responsive transcription factor ERF017 (185 aa).

Residues 11 to 68 (KYKGVRKRKWGKWVSEIRLPNSRERIWLGSYDTPEKAARAFDAALYCLRGNNAKFNFP) constitute a DNA-binding region (AP2/ERF).

Belongs to the AP2/ERF transcription factor family. ERF subfamily.

The protein resides in the nucleus. In terms of biological role, probably acts as a transcriptional activator. Binds to the GCC-box pathogenesis-related promoter element. May be involved in the regulation of gene expression by stress factors and by components of stress signal transduction pathways. In Arabidopsis thaliana (Mouse-ear cress), this protein is Ethylene-responsive transcription factor ERF017 (ERF017).